The primary structure comprises 498 residues: Cytochrome P450 71D15 (498 aa).

The chain crosses the membrane as a helical; Signal-anchor for type II membrane protein span at residues 3–23; that stretch reads LLQLWSALIILVVTYTISLLI. Cysteine 437 lines the heme pocket.

This sequence belongs to the cytochrome P450 family. The cofactor is heme.

The protein localises to the endoplasmic reticulum membrane. It carries out the reaction (4S)-limonene + reduced [NADPH--hemoprotein reductase] + O2 = (1S,6R)-isopiperitenol + oxidized [NADPH--hemoprotein reductase] + H2O + H(+). Functionally, hydroxylates (-)-(4S)-limonene to (-)-trans-isopiperitenol, a precursor of (-)-menthol, responsible for the cooling sensation of peppermint. Fluorinated substrate analogs are hydroxylated with the same regio- and stereochemistry. In Mentha piperita (Peppermint), this protein is Cytochrome P450 71D15 (CYP71D15).